The primary structure comprises 77 residues: Protein UL148C (77 aa).

The next 2 membrane-spanning stretches (helical) occupy residues 10 to 30 and 35 to 55; these read VLYL…AVAV and IAWA…VGAA.

Its subcellular location is the host membrane. The protein is Protein UL148C (UL148C) of Homo sapiens (Human).